Consider the following 259-residue polypeptide: Phosphatidylglycerol--prolipoprotein diacylglyceryl transferase (259 aa).

7 helical membrane-spanning segments follow: residues 9-29 (LGPL…ILAV), 48-68 (DFIL…YVIF), 83-103 (IWHG…VLFI), 114-133 (DFLD…GRWG), 167-187 (TPTF…IMIL), 197-217 (GEVA…IEGM), and 227-247 (LRVS…LIVI). A 1,2-diacyl-sn-glycero-3-phospho-(1'-sn-glycerol) is bound at residue Arg-131.

The protein belongs to the Lgt family.

It is found in the cell membrane. The enzyme catalyses L-cysteinyl-[prolipoprotein] + a 1,2-diacyl-sn-glycero-3-phospho-(1'-sn-glycerol) = an S-1,2-diacyl-sn-glyceryl-L-cysteinyl-[prolipoprotein] + sn-glycerol 1-phosphate + H(+). It participates in protein modification; lipoprotein biosynthesis (diacylglyceryl transfer). Its function is as follows. Catalyzes the transfer of the diacylglyceryl group from phosphatidylglycerol to the sulfhydryl group of the N-terminal cysteine of a prolipoprotein, the first step in the formation of mature lipoproteins. This is Phosphatidylglycerol--prolipoprotein diacylglyceryl transferase from Streptococcus mutans serotype c (strain ATCC 700610 / UA159).